We begin with the raw amino-acid sequence, 322 residues long: Glutamyl-Q tRNA(Asp) synthetase (322 aa).

Residues 28-32 and Glu64 contribute to the L-glutamate site; that span reads RFAPS. The 'HIGH' region motif lies at 31–41; the sequence is PSPSGDLHFGS. The Zn(2+) site is built by Cys120, Cys122, Tyr134, and Cys138. Positions 191 and 209 each coordinate L-glutamate. The 'KMSKS' region motif lies at 247-251; it reads KLSKQ. Lys250 contacts ATP.

Belongs to the class-I aminoacyl-tRNA synthetase family. GluQ subfamily. Zn(2+) is required as a cofactor.

Catalyzes the tRNA-independent activation of glutamate in presence of ATP and the subsequent transfer of glutamate onto a tRNA(Asp). Glutamate is transferred on the 2-amino-5-(4,5-dihydroxy-2-cyclopenten-1-yl) moiety of the queuosine in the wobble position of the QUC anticodon. This Pectobacterium atrosepticum (strain SCRI 1043 / ATCC BAA-672) (Erwinia carotovora subsp. atroseptica) protein is Glutamyl-Q tRNA(Asp) synthetase.